The chain runs to 412 residues: Arginine biosynthesis bifunctional protein ArgJ (412 aa).

Substrate-binding residues include Thr162, Lys188, Thr199, Glu285, Asn407, and Thr412. Catalysis depends on Thr199, which acts as the Nucleophile.

Belongs to the ArgJ family. In terms of assembly, heterotetramer of two alpha and two beta chains.

Its subcellular location is the cytoplasm. It carries out the reaction N(2)-acetyl-L-ornithine + L-glutamate = N-acetyl-L-glutamate + L-ornithine. It catalyses the reaction L-glutamate + acetyl-CoA = N-acetyl-L-glutamate + CoA + H(+). It participates in amino-acid biosynthesis; L-arginine biosynthesis; L-ornithine and N-acetyl-L-glutamate from L-glutamate and N(2)-acetyl-L-ornithine (cyclic): step 1/1. Its pathway is amino-acid biosynthesis; L-arginine biosynthesis; N(2)-acetyl-L-ornithine from L-glutamate: step 1/4. In terms of biological role, catalyzes two activities which are involved in the cyclic version of arginine biosynthesis: the synthesis of N-acetylglutamate from glutamate and acetyl-CoA as the acetyl donor, and of ornithine by transacetylation between N(2)-acetylornithine and glutamate. This Staphylococcus saprophyticus subsp. saprophyticus (strain ATCC 15305 / DSM 20229 / NCIMB 8711 / NCTC 7292 / S-41) protein is Arginine biosynthesis bifunctional protein ArgJ.